A 121-amino-acid chain; its full sequence is Large ribosomal subunit protein bL12 (121 aa).

It belongs to the bacterial ribosomal protein bL12 family. In terms of assembly, homodimer. Part of the ribosomal stalk of the 50S ribosomal subunit. Forms a multimeric L10(L12)X complex, where L10 forms an elongated spine to which 2 to 4 L12 dimers bind in a sequential fashion. Binds GTP-bound translation factors.

Functionally, forms part of the ribosomal stalk which helps the ribosome interact with GTP-bound translation factors. Is thus essential for accurate translation. In Mesomycoplasma hyopneumoniae (strain 232) (Mycoplasma hyopneumoniae), this protein is Large ribosomal subunit protein bL12.